The following is a 287-amino-acid chain: MAIRKFRPYTPGTRTRVVTDFSEVTGRKPEKTLVVSKHRKKGRNNRGVITCRHRGGGHKRLYRLVDFRRNKHGVTAKVAAIHYDPHRNARLALLFYSDGEKRYILAPAGVQVGQTVVSGPEVPIENGNAMPLSSVPLGSSVHCVELYAGRGGQMVRTAGASAQVMAKEGDYVALKLPSTEVRLVRRECYATLGEVGNSEVRNTSLGKAGRRRWLGRRPQVRGSVMNPCDHPHGGGEGRAPIGRSGPVTPWGKPALGLKTRKRNKPSNQYVLRKRRKTSKRSRGGRDS.

The tract at residues 221 to 287 (RGSVMNPCDH…SKRSRGGRDS (67 aa)) is disordered. The segment covering 271-287 (LRKRRKTSKRSRGGRDS) has biased composition (basic residues).

This sequence belongs to the universal ribosomal protein uL2 family. As to quaternary structure, part of the 50S ribosomal subunit. Forms a bridge to the 30S subunit in the 70S ribosome.

In terms of biological role, one of the primary rRNA binding proteins. Required for association of the 30S and 50S subunits to form the 70S ribosome, for tRNA binding and peptide bond formation. It has been suggested to have peptidyltransferase activity; this is somewhat controversial. Makes several contacts with the 16S rRNA in the 70S ribosome. The polypeptide is Large ribosomal subunit protein uL2 (Synechococcus sp. (strain CC9902)).